A 493-amino-acid chain; its full sequence is Transcript termination protein OPG145 (493 aa).

One can recognise a Helicase ATP-binding domain in the interval 100 to 256 (MIESKRPLYI…NSIINIAKLS (157 aa)). ATP is bound at residue 113 to 120 (LACGFGKT). The DESH box signature appears at 206-209 (DESH). The region spanning 309 to 456 (ILDTLVEEFK…IISLSVDKLG (148 aa)) is the Helicase C-terminal domain.

It belongs to the helicase family. Poxviruses subfamily. Interacts with OPG087. Might be part of a transcription complex composed at least of OPG087, OPG110, and OPG145.

It is found in the virion. In terms of biological role, DNA helicase which seems to act as a postreplicative transcription termination factor. Involved in ATP-dependent release of nascent RNA. Forms a stable complex with single-stranded DNA, and to a lesser extent RNA. The sequence is that of Transcript termination protein OPG145 (OPG145) from Homo sapiens (Human).